The sequence spans 256 residues: Pyrroloquinoline-quinone synthase (256 aa).

This sequence belongs to the PqqC family.

The catalysed reaction is 6-(2-amino-2-carboxyethyl)-7,8-dioxo-1,2,3,4,7,8-hexahydroquinoline-2,4-dicarboxylate + 3 O2 = pyrroloquinoline quinone + 2 H2O2 + 2 H2O + H(+). It participates in cofactor biosynthesis; pyrroloquinoline quinone biosynthesis. Its function is as follows. Ring cyclization and eight-electron oxidation of 3a-(2-amino-2-carboxyethyl)-4,5-dioxo-4,5,6,7,8,9-hexahydroquinoline-7,9-dicarboxylic-acid to PQQ. In Rhizobium meliloti (strain 1021) (Ensifer meliloti), this protein is Pyrroloquinoline-quinone synthase.